The chain runs to 255 residues: Putative deoxyribonuclease tatdn3-B (255 aa).

Zn(2+) is bound by residues H11, H13, E106, H129, H152, and D199.

Belongs to the metallo-dependent hydrolases superfamily. TatD-type hydrolase family. Mn(2+) is required as a cofactor. Ca(2+) serves as cofactor. The cofactor is Mg(2+). It depends on Zn(2+) as a cofactor.

The protein resides in the nucleus. The 3'-exonuclease activity is sensitive to the metal ion present in the active site, whereas the AP endodeoxyribonuclease activity is observed in a variety of divalent metal cofactors. 3'-exoxonuclease activity is suppressed in the presence of Ca(2+), Zn(2+) and Ni(2+). Functionally, exhibits 3'-exonuclease activities and apurinic/apyrimidinic (AP) endonuclease (in vitro). Show preferential AP endonuclease activity on double-stranded DNA substrates and 3'- exonuclease activity on single-stranded DNA. This Xenopus laevis (African clawed frog) protein is Putative deoxyribonuclease tatdn3-B (tatdn3-b).